Reading from the N-terminus, the 1008-residue chain is Pheromone-regulated membrane protein 10 (1008 aa).

3 disordered regions span residues Met1 to Gly273, Lys342 to Pro384, and Lys477 to Glu506. Residues Asp70–Asp85 are compositionally biased toward low complexity. Positions Gly95–His111 are enriched in polar residues. Composition is skewed to acidic residues over residues Ala116–Phe132 and Gly143–Glu161. The segment covering Glu162–Lys186 has biased composition (basic and acidic residues). Polar residues predominate over residues Phe188–Arg204. A compositionally biased stretch (basic and acidic residues) spans Asn205–Lys214. Residues Arg215–Arg225 are compositionally biased toward low complexity. Basic and acidic residues predominate over residues Ser226–Arg239. Residues Gly346–Ile364 show a composition bias toward polar residues. Basic residues predominate over residues Gly483–Ala498. 10 consecutive transmembrane segments (helical) span residues Ser683–Phe703, Trp707–Val727, Ser736–Ile756, Phe762–Leu782, Met800–Leu820, Ile838–Ile858, Leu866–His886, Val892–Ser912, Gly917–Ser937, and Val978–Phe998.

This sequence belongs to the ThrE exporter (TC 2.A.79) family.

The protein localises to the membrane. This chain is Pheromone-regulated membrane protein 10, found in Debaryomyces hansenii (strain ATCC 36239 / CBS 767 / BCRC 21394 / JCM 1990 / NBRC 0083 / IGC 2968) (Yeast).